The following is a 236-amino-acid chain: Putative N-acetylmannosamine-6-phosphate 2-epimerase (236 aa).

This sequence belongs to the NanE family.

The enzyme catalyses an N-acyl-D-glucosamine 6-phosphate = an N-acyl-D-mannosamine 6-phosphate. The protein operates within amino-sugar metabolism; N-acetylneuraminate degradation; D-fructose 6-phosphate from N-acetylneuraminate: step 3/5. Functionally, converts N-acetylmannosamine-6-phosphate (ManNAc-6-P) to N-acetylglucosamine-6-phosphate (GlcNAc-6-P). This Listeria welshimeri serovar 6b (strain ATCC 35897 / DSM 20650 / CCUG 15529 / CIP 8149 / NCTC 11857 / SLCC 5334 / V8) protein is Putative N-acetylmannosamine-6-phosphate 2-epimerase.